The primary structure comprises 174 residues: Histone deacetylase complex subunit SAP30 homolog (174 aa).

The segment at 22-70 (CCLLDDGERCRKQAGNASYSKRIQKTVTQRRLKLSIDSHARHIYICDFH) adopts an Atypical zinc-finger fold.

This sequence belongs to the SAP30 family. In terms of assembly, component of the class 1 Sin3-histone deacetylase complex (HDAC).

It is found in the nucleus. Its function is as follows. Required for the function of the class 1 Sin3-histone deacetylase complex (HDAC). This Anopheles gambiae (African malaria mosquito) protein is Histone deacetylase complex subunit SAP30 homolog.